A 150-amino-acid chain; its full sequence is Large ribosomal subunit protein bL9 (150 aa).

Belongs to the bacterial ribosomal protein bL9 family.

Functionally, binds to the 23S rRNA. The sequence is that of Large ribosomal subunit protein bL9 from Vesicomyosocius okutanii subsp. Calyptogena okutanii (strain HA).